A 275-amino-acid polypeptide reads, in one-letter code: Protein FAM210A (275 aa).

The interval S68–Q108 is disordered. Residues T74–P84 show a composition bias toward basic and acidic residues. One can recognise a DUF1279 domain in the interval D109 to K221. Residues V128–A148 traverse the membrane as a helical segment. Residues K221 to K271 are a coiled coil.

This sequence belongs to the FAM210 family. In terms of assembly, interacts with ATAD3A.

The protein localises to the membrane. It localises to the mitochondrion. The protein resides in the cytoplasm. Its function is as follows. May play a role in the structure and strength of both muscle and bone. The chain is Protein FAM210A (FAM210A) from Gallus gallus (Chicken).